A 720-amino-acid polypeptide reads, in one-letter code: Polyribonucleotide nucleotidyltransferase (720 aa).

Mg(2+) is bound by residues Asp-487 and Asp-493. Residues 554–613 (PRITTISIPKEKIREVIGTGGKVIREICEQTGAKIDIDDDGTIKVASVDADAAQRAIDWI) form the KH domain. The region spanning 623-691 (GVIYNGKVVK…DRGKVKLSMK (69 aa)) is the S1 motif domain. The disordered stretch occupies residues 695-720 (QTTGEDISAQLEAERAASKRERHHED). Basic and acidic residues predominate over residues 706–720 (EAERAASKRERHHED).

Belongs to the polyribonucleotide nucleotidyltransferase family. Requires Mg(2+) as cofactor.

It is found in the cytoplasm. It carries out the reaction RNA(n+1) + phosphate = RNA(n) + a ribonucleoside 5'-diphosphate. Involved in mRNA degradation. Catalyzes the phosphorolysis of single-stranded polyribonucleotides processively in the 3'- to 5'-direction. This chain is Polyribonucleotide nucleotidyltransferase, found in Paramagnetospirillum magneticum (strain ATCC 700264 / AMB-1) (Magnetospirillum magneticum).